The sequence spans 434 residues: L-2-hydroxyglutarate dehydrogenase, mitochondrial (434 aa).

It belongs to the L2HGDH family. Requires FAD as cofactor.

It is found in the mitochondrion. It carries out the reaction (S)-2-hydroxyglutarate + A = 2-oxoglutarate + AH2. The sequence is that of L-2-hydroxyglutarate dehydrogenase, mitochondrial from Caenorhabditis briggsae.